Consider the following 176-residue polypeptide: NADH-quinone oxidoreductase subunit B 1 (176 aa).

[4Fe-4S] cluster contacts are provided by cysteine 55, cysteine 56, cysteine 120, and cysteine 150.

This sequence belongs to the complex I 20 kDa subunit family. As to quaternary structure, NDH-1 is composed of 14 different subunits. Subunits NuoB, C, D, E, F, and G constitute the peripheral sector of the complex. [4Fe-4S] cluster serves as cofactor.

It localises to the cell inner membrane. It catalyses the reaction a quinone + NADH + 5 H(+)(in) = a quinol + NAD(+) + 4 H(+)(out). Functionally, NDH-1 shuttles electrons from NADH, via FMN and iron-sulfur (Fe-S) centers, to quinones in the respiratory chain. Couples the redox reaction to proton translocation (for every two electrons transferred, four hydrogen ions are translocated across the cytoplasmic membrane), and thus conserves the redox energy in a proton gradient. The polypeptide is NADH-quinone oxidoreductase subunit B 1 (Cereibacter sphaeroides (strain ATCC 17029 / ATH 2.4.9) (Rhodobacter sphaeroides)).